Consider the following 110-residue polypeptide: uncharacterized protein (110 aa).

It belongs to the RuBisCO large chain family.

The protein resides in the mitochondrion. This is an uncharacterized protein from Arabidopsis thaliana (Mouse-ear cress).